We begin with the raw amino-acid sequence, 110 residues long: UPF0367 protein sync_2587 (110 aa).

It belongs to the UPF0367 family.

The protein is UPF0367 protein sync_2587 of Synechococcus sp. (strain CC9311).